Here is a 274-residue protein sequence, read N- to C-terminus: Hydroxyethylthiazole kinase (274 aa).

Met-51 serves as a coordination point for substrate. Residues Arg-127 and Ser-173 each contribute to the ATP site. Substrate is bound at residue Gly-200.

It belongs to the Thz kinase family. Mg(2+) serves as cofactor.

The catalysed reaction is 5-(2-hydroxyethyl)-4-methylthiazole + ATP = 4-methyl-5-(2-phosphooxyethyl)-thiazole + ADP + H(+). Its pathway is cofactor biosynthesis; thiamine diphosphate biosynthesis; 4-methyl-5-(2-phosphoethyl)-thiazole from 5-(2-hydroxyethyl)-4-methylthiazole: step 1/1. Functionally, catalyzes the phosphorylation of the hydroxyl group of 4-methyl-5-beta-hydroxyethylthiazole (THZ). This chain is Hydroxyethylthiazole kinase, found in Photobacterium profundum (strain SS9).